The primary structure comprises 111 residues: MVCMRFRYICHRKPERTFSFRGHYFPVCSRCTGIYLGAFTYFLYAFLIPVKYTAATVLLALLLVIPTFIDGFTQLMGYRESNNVLRFSTGLPAGIGLAVLTKVLKHLILHI.

The next 2 membrane-spanning stretches (helical) occupy residues 45 to 65 (AFLI…LLVI) and 91 to 111 (LPAG…ILHI).

The protein resides in the cell membrane. This is an uncharacterized protein from Methanothermobacter thermautotrophicus (strain ATCC 29096 / DSM 1053 / JCM 10044 / NBRC 100330 / Delta H) (Methanobacterium thermoautotrophicum).